The primary structure comprises 123 residues: Small ribosomal subunit protein uS12c (123 aa).

The tract at residues 9–31 is disordered; sequence RNKRQAAENKTKSPALQRSPQRR.

Belongs to the universal ribosomal protein uS12 family. In terms of assembly, part of the 30S ribosomal subunit.

It is found in the plastid. It localises to the chloroplast. Functionally, with S4 and S5 plays an important role in translational accuracy. Located at the interface of the 30S and 50S subunits. In Spirogyra maxima (Green alga), this protein is Small ribosomal subunit protein uS12c (rps12).